The following is a 3005-amino-acid chain: Highly reducing polyketide synthase AFT9-1 (3005 aa).

The 337-residue stretch at 1-337 (MDPQQRLLLE…GTNAHAILER (337 aa)) folds into the Ketosynthase family 3 (KS3) domain. Catalysis depends on for beta-ketoacyl synthase activity residues Cys-87, His-222, and His-260. Positions 437–751 (VFTGQGAQWP…SYMSALVRGS (315 aa)) are malonyl-CoA:ACP transacylase (MAT) domain. Residues 821-936 (HDLLGLKMTD…GSVEVKYAAA (116 aa)) form an N-terminal hotdog fold region. The segment at 821-1114 (HDLLGLKMTD…SGLELRRLAP (294 aa)) is dehydratase (DH) domain. Residues 821–1118 (HDLLGLKMTD…LRRLAPTGQP (298 aa)) enclose the PKS/mFAS DH domain. His-853 functions as the Proton acceptor; for dehydratase activity in the catalytic mechanism. The interval 963 to 1118 (IEKISSQELY…LRRLAPTGQP (156 aa)) is C-terminal hotdog fold. Asp-1028 acts as the Proton donor; for dehydratase activity in catalysis. The methyltransferase (CMet) domain stretch occupies residues 1259 to 1445 (ADDSSKRCYD…MRKASLNMQL (187 aa)). An enoyl reductase (ER) (ER) domain region spans residues 1683-1985 (EFMKMPVFTE…QHHRNESTVL (303 aa)). The tract at residues 2008-2191 (ATYVVSGGRG…YMSLNVGTIE (184 aa)) is ketoreductase (KR) domain. A Carrier domain is found at 2293–2375 (TRDFEKISQL…SLGAKVASRS (83 aa)). Ser-2335 is subject to O-(pantetheine 4'-phosphoryl)serine.

Its pathway is mycotoxin biosynthesis. In terms of biological role, highly reducing polyketide synthase; part of the gene clusters that mediate the biosynthesis of the host-selective toxins (HSTs) AF-toxins responsible for Alternaria black spot of strawberry disease by the strawberry pathotype. AF-toxin I and III are valine derivatives of 2,3-dyhydroxy-isovaleric acid and 2-hydroxy-isovaleric acid respectively, while AF II is an isoleucine derivative of 2-hydroxy-valeric acid. These derivatives are bound to a 9,10-epoxy-8-hydroxy-9-methyl-decatrienoic acid (EDA) moiety. On cellular level, AF-toxins affect plasma membrane of susceptible cells and cause a sudden increase in loss of K(+) after a few minutes of toxin treatment. The aldo-keto reductase AFTS1 catalyzes the conversion of 2-keto-isovaleric acid (2-KIV) to 2-hydroxy-isovaleric acid (2-HIV) by reduction of its ketone to an alcohol. The acyl-CoA ligase AFT1, the hydrolase AFT2 and the enoyl-CoA hydratases AFT3 and AFT6, but also the polyketide synthase AFT9, the acyl-CoA dehydrogenase AFT10, the cytochrome P450 monooxygenase AFT11 and the oxidoreductase AFT12 are all involved in the biosynthesis of the AK-, AF- and ACT-toxin common EDA structural moiety. The exact function of each enzyme, and of additional enzymes identified within the AF-toxin clusters have still to be determined. This chain is Highly reducing polyketide synthase AFT9-1, found in Alternaria alternata (Alternaria rot fungus).